Here is a 475-residue protein sequence, read N- to C-terminus: 3-isopropylmalate dehydratase large subunit (475 aa).

Residues Cys-352, Cys-412, and Cys-415 each coordinate [4Fe-4S] cluster.

The protein belongs to the aconitase/IPM isomerase family. LeuC type 1 subfamily. Heterodimer of LeuC and LeuD. Requires [4Fe-4S] cluster as cofactor.

It catalyses the reaction (2R,3S)-3-isopropylmalate = (2S)-2-isopropylmalate. It participates in amino-acid biosynthesis; L-leucine biosynthesis; L-leucine from 3-methyl-2-oxobutanoate: step 2/4. Its function is as follows. Catalyzes the isomerization between 2-isopropylmalate and 3-isopropylmalate, via the formation of 2-isopropylmaleate. In Gluconobacter oxydans (strain 621H) (Gluconobacter suboxydans), this protein is 3-isopropylmalate dehydratase large subunit.